Consider the following 146-residue polypeptide: Ribosome-binding factor A (146 aa).

The interval 121 to 146 (KQQQFGSADDVTENDIDEADDTEGKA) is disordered. The segment covering 130–146 (DVTENDIDEADDTEGKA) has biased composition (acidic residues).

This sequence belongs to the RbfA family. As to quaternary structure, monomer. Binds 30S ribosomal subunits, but not 50S ribosomal subunits or 70S ribosomes.

Its subcellular location is the cytoplasm. Its function is as follows. One of several proteins that assist in the late maturation steps of the functional core of the 30S ribosomal subunit. Associates with free 30S ribosomal subunits (but not with 30S subunits that are part of 70S ribosomes or polysomes). Required for efficient processing of 16S rRNA. May interact with the 5'-terminal helix region of 16S rRNA. In Shewanella sp. (strain MR-4), this protein is Ribosome-binding factor A.